The following is a 153-amino-acid chain: Nitrogen regulatory protein (153 aa).

Residues 5-148 (DLVAPEAILP…QAIYSVLALP (144 aa)) form the PTS EIIA type-2 domain. Residue H66 is the Tele-phosphohistidine intermediate of the active site.

It is found in the cytoplasm. Its function is as follows. Seems to have a role in regulating nitrogen assimilation. This is Nitrogen regulatory protein (ptsN) from Bradyrhizobium diazoefficiens (strain JCM 10833 / BCRC 13528 / IAM 13628 / NBRC 14792 / USDA 110).